Reading from the N-terminus, the 125-residue chain is Putative zinc finger A20 and AN1 domain-containing stress-associated protein 8 (125 aa).

The segment at 2–36 (TGEPSLCIRGCGFFSTSQTKNLCSKCYNDFLKDES) adopts an A20-type zinc-finger fold. Cysteine 8, cysteine 12, cysteine 24, cysteine 27, cysteine 80, cysteine 82, histidine 96, and cysteine 98 together coordinate Zn(2+). Residues 61–106 (LGSKGGCACKKKVGLLGFHCRCGHLFFASHRYPEEHSCPSDYKSAA) form an AN1-type; degenerate zinc finger.

Functionally, may be involved in environmental stress response. The polypeptide is Putative zinc finger A20 and AN1 domain-containing stress-associated protein 8 (SAP8) (Arabidopsis thaliana (Mouse-ear cress)).